The primary structure comprises 247 residues: Geranylgeranylglyceryl phosphate synthase (247 aa).

The Mg(2+) site is built by Asp-23 and Ser-52. Residues 171-177 (YLEAGSG), 203-204 (GG), and 225-226 (GT) contribute to the sn-glycerol 1-phosphate site.

The protein belongs to the GGGP/HepGP synthase family. Group II subfamily. It depends on Mg(2+) as a cofactor.

It is found in the cytoplasm. It catalyses the reaction sn-glycerol 1-phosphate + (2E,6E,10E)-geranylgeranyl diphosphate = sn-3-O-(geranylgeranyl)glycerol 1-phosphate + diphosphate. Its pathway is membrane lipid metabolism; glycerophospholipid metabolism. Its function is as follows. Prenyltransferase that catalyzes the transfer of the geranylgeranyl moiety of geranylgeranyl diphosphate (GGPP) to the C3 hydroxyl of sn-glycerol-1-phosphate (G1P). This reaction is the first ether-bond-formation step in the biosynthesis of archaeal membrane lipids. This chain is Geranylgeranylglyceryl phosphate synthase, found in Methanosarcina mazei (strain ATCC BAA-159 / DSM 3647 / Goe1 / Go1 / JCM 11833 / OCM 88) (Methanosarcina frisia).